Consider the following 458-residue polypeptide: Chromosomal replication initiator protein DnaA (458 aa).

A domain I, interacts with DnaA modulators region spans residues 1-84 (MENIWLEAQT…FHVAEEKPEA (84 aa)). Over residues 80 to 119 (EKPEAAHEAKPEKEAKPAREKERDKDKEKEKDREKEKKEL) the composition is skewed to basic and acidic residues. The interval 80–120 (EKPEAAHEAKPEKEAKPAREKERDKDKEKEKDREKEKKELV) is disordered. Residues 84–121 (AAHEAKPEKEAKPAREKERDKDKEKEKDREKEKKELVP) form a domain II region. Residues 122 to 338 (NLNPKYTFES…GMLIRLEAFA (217 aa)) are domain III, AAA+ region. Residues Gly-166, Gly-168, Lys-169, and Thr-170 each contribute to the ATP site. The tract at residues 339–458 (SLTGQEITLS…VEDIRKKLFT (120 aa)) is domain IV, binds dsDNA.

Belongs to the DnaA family. As to quaternary structure, oligomerizes as a right-handed, spiral filament on DNA at oriC.

Its subcellular location is the cytoplasm. Its function is as follows. Plays an essential role in the initiation and regulation of chromosomal replication. ATP-DnaA binds to the origin of replication (oriC) to initiate formation of the DNA replication initiation complex once per cell cycle. Binds the DnaA box (a 9 base pair repeat at the origin) and separates the double-stranded (ds)DNA. Forms a right-handed helical filament on oriC DNA; dsDNA binds to the exterior of the filament while single-stranded (ss)DNA is stabiized in the filament's interior. The ATP-DnaA-oriC complex binds and stabilizes one strand of the AT-rich DNA unwinding element (DUE), permitting loading of DNA polymerase. After initiation quickly degrades to an ADP-DnaA complex that is not apt for DNA replication. Binds acidic phospholipids. This Citrifermentans bemidjiense (strain ATCC BAA-1014 / DSM 16622 / JCM 12645 / Bem) (Geobacter bemidjiensis) protein is Chromosomal replication initiator protein DnaA.